The following is a 154-amino-acid chain: Myoglobin (154 aa).

Positions 2 to 148 (VLSDAEWHLV…FRKDIAAKYK (147 aa)) constitute a Globin domain. Phosphoserine is present on Ser4. His65 lines the nitrite pocket. His65 is a binding site for O2. Thr68 is modified (phosphothreonine). His94 serves as a coordination point for heme b.

The protein belongs to the globin family. Monomeric.

Its subcellular location is the cytoplasm. The protein localises to the sarcoplasm. The enzyme catalyses Fe(III)-heme b-[protein] + nitric oxide + H2O = Fe(II)-heme b-[protein] + nitrite + 2 H(+). It catalyses the reaction H2O2 + AH2 = A + 2 H2O. Its function is as follows. Monomeric heme protein which primary function is to store oxygen and facilitate its diffusion within muscle tissues. Reversibly binds oxygen through a pentacoordinated heme iron and enables its timely and efficient release as needed during periods of heightened demand. Depending on the oxidative conditions of tissues and cells, and in addition to its ability to bind oxygen, it also has a nitrite reductase activity whereby it regulates the production of bioactive nitric oxide. Under stress conditions, like hypoxia and anoxia, it also protects cells against reactive oxygen species thanks to its pseudoperoxidase activity. This chain is Myoglobin (MB), found in Balaenoptera acutorostrata (Common minke whale).